Reading from the N-terminus, the 405-residue chain is Deoxyguanosinetriphosphate triphosphohydrolase-like protein (405 aa).

The region spanning 75–219 is the HD domain; sequence RLTHTIEVAQ…AAVADDIAYN (145 aa).

This sequence belongs to the dGTPase family. Type 2 subfamily.

This is Deoxyguanosinetriphosphate triphosphohydrolase-like protein from Allorhizobium ampelinum (strain ATCC BAA-846 / DSM 112012 / S4) (Agrobacterium vitis (strain S4)).